Here is a 314-residue protein sequence, read N- to C-terminus: Olfactory receptor 10T2 (314 aa).

Topologically, residues 1–26 (MRGFNKTTVVTQFILVGFSSLGELQL) are extracellular. N5 carries an N-linked (GlcNAc...) asparagine glycan. The chain crosses the membrane as a helical span at residues 27-47 (LLFVIFLLLYLTILVANVTIM). Residues 48–55 (AVIRFSWT) lie on the Cytoplasmic side of the membrane. A helical transmembrane segment spans residues 56 to 76 (LHTPMYGFLFILSFSESCYTF). At 77-100 (VIIPQLLVHLLSDTKTISFMACAT) the chain is on the extracellular side. Residues C98 and C190 are joined by a disulfide bond. A helical membrane pass occupies residues 101–121 (QLFFFLGFACTNCLLIAVMGY). Topologically, residues 122–140 (DRYVAICHPLRYTLIINKR) are cytoplasmic. A helical membrane pass occupies residues 141-161 (LGLELISLSGATGFFIALVAT). At 162–198 (NLICDMRFCGPNRVNHYFCDMAPVIKLACTDTHVKEL) the chain is on the extracellular side. A helical membrane pass occupies residues 199 to 218 (ALFSLSILVIMVPFLLILIS). Residues 219 to 237 (YGFIVNTILKIPSAEGKKA) are Cytoplasmic-facing. A helical transmembrane segment spans residues 238–258 (FVTCASHLTVVFVHYGCASII). The Extracellular portion of the chain corresponds to 259–271 (YLRPKSKSASDKD). A helical transmembrane segment spans residues 272 to 292 (QLVAVTYTVVTPLLNPLVYSL). Over 293 to 314 (RNKEVKTALKRVLGMPVATKMS) the chain is Cytoplasmic.

This sequence belongs to the G-protein coupled receptor 1 family.

It localises to the cell membrane. Odorant receptor. In Homo sapiens (Human), this protein is Olfactory receptor 10T2 (OR10T2).